Here is a 158-residue protein sequence, read N- to C-terminus: 3-hydroxyacyl-[acyl-carrier-protein] dehydratase FabZ (158 aa).

His57 is a catalytic residue.

This sequence belongs to the thioester dehydratase family. FabZ subfamily.

The protein localises to the cytoplasm. The enzyme catalyses a (3R)-hydroxyacyl-[ACP] = a (2E)-enoyl-[ACP] + H2O. In terms of biological role, involved in unsaturated fatty acids biosynthesis. Catalyzes the dehydration of short chain beta-hydroxyacyl-ACPs and long chain saturated and unsaturated beta-hydroxyacyl-ACPs. This chain is 3-hydroxyacyl-[acyl-carrier-protein] dehydratase FabZ, found in Anaeromyxobacter sp. (strain Fw109-5).